Here is a 694-residue protein sequence, read N- to C-terminus: Elongation factor G (694 aa).

A tr-type G domain is found at 9–288 (DAIRNIGIMA…VIVKWLPSPL (280 aa)). Residues 18 to 25 (AHIDAGKT), 82 to 86 (DTPGH), and 136 to 139 (NKMD) each bind GTP.

The protein belongs to the TRAFAC class translation factor GTPase superfamily. Classic translation factor GTPase family. EF-G/EF-2 subfamily.

The protein localises to the cytoplasm. Catalyzes the GTP-dependent ribosomal translocation step during translation elongation. During this step, the ribosome changes from the pre-translocational (PRE) to the post-translocational (POST) state as the newly formed A-site-bound peptidyl-tRNA and P-site-bound deacylated tRNA move to the P and E sites, respectively. Catalyzes the coordinated movement of the two tRNA molecules, the mRNA and conformational changes in the ribosome. This is Elongation factor G from Chlamydia trachomatis serovar A (strain ATCC VR-571B / DSM 19440 / HAR-13).